The sequence spans 101 residues: MLLEHVLVLSAYLFSIGIYGLITSRNMVRALMCLELILNAVNMNFVTFSDFFDKRQLKGDIFSIFVIAIAAAEAAIGSAIVSSIYRNRKSTRINQSTLLNK.

Transmembrane regions (helical) follow at residues 2–22 (LLEHVLVLSAYLFSIGIYGLI), 32–52 (MCLELILNAVNMNFVTFSDFF), and 61–81 (IFSIFVIAIAAAEAAIGSAIV).

This sequence belongs to the complex I subunit 4L family. NDH is composed of at least 16 different subunits, 5 of which are encoded in the nucleus.

Its subcellular location is the plastid. It is found in the chloroplast thylakoid membrane. The enzyme catalyses a plastoquinone + NADH + (n+1) H(+)(in) = a plastoquinol + NAD(+) + n H(+)(out). The catalysed reaction is a plastoquinone + NADPH + (n+1) H(+)(in) = a plastoquinol + NADP(+) + n H(+)(out). Its function is as follows. NDH shuttles electrons from NAD(P)H:plastoquinone, via FMN and iron-sulfur (Fe-S) centers, to quinones in the photosynthetic chain and possibly in a chloroplast respiratory chain. The immediate electron acceptor for the enzyme in this species is believed to be plastoquinone. Couples the redox reaction to proton translocation, and thus conserves the redox energy in a proton gradient. The protein is NAD(P)H-quinone oxidoreductase subunit 4L, chloroplastic of Carica papaya (Papaya).